A 224-amino-acid chain; its full sequence is UPF0758 protein PLES_57141 (224 aa).

Residues 102-224 (ILESPQAVRD…PLSLAEYGWL (123 aa)) form the MPN domain. Zn(2+)-binding residues include histidine 173, histidine 175, and aspartate 186. Residues 173–186 (HNHPSGDARPSLAD) carry the JAMM motif motif.

This sequence belongs to the UPF0758 family.

The chain is UPF0758 protein PLES_57141 from Pseudomonas aeruginosa (strain LESB58).